The chain runs to 676 residues: tRNA 5-methylaminomethyl-2-thiouridine biosynthesis bifunctional protein MnmC (676 aa).

Residues 1–241 (MFTVTPAKIY…KRECLCGIKN (241 aa)) are tRNA (mnm(5)s(2)U34)-methyltransferase. Positions 268 to 676 (IGGGIASLFT…RKLLKGTEIK (409 aa)) are FAD-dependent cmnm(5)s(2)U34 oxidoreductase.

It in the N-terminal section; belongs to the methyltransferase superfamily. tRNA (mnm(5)s(2)U34)-methyltransferase family. This sequence in the C-terminal section; belongs to the DAO family. FAD is required as a cofactor.

The protein resides in the cytoplasm. It carries out the reaction 5-aminomethyl-2-thiouridine(34) in tRNA + S-adenosyl-L-methionine = 5-methylaminomethyl-2-thiouridine(34) in tRNA + S-adenosyl-L-homocysteine + H(+). In terms of biological role, catalyzes the last two steps in the biosynthesis of 5-methylaminomethyl-2-thiouridine (mnm(5)s(2)U) at the wobble position (U34) in tRNA. Catalyzes the FAD-dependent demodification of cmnm(5)s(2)U34 to nm(5)s(2)U34, followed by the transfer of a methyl group from S-adenosyl-L-methionine to nm(5)s(2)U34, to form mnm(5)s(2)U34. This Histophilus somni (strain 129Pt) (Haemophilus somnus) protein is tRNA 5-methylaminomethyl-2-thiouridine biosynthesis bifunctional protein MnmC.